The following is a 569-amino-acid chain: Proline--tRNA ligase (569 aa).

This sequence belongs to the class-II aminoacyl-tRNA synthetase family. ProS type 1 subfamily. As to quaternary structure, homodimer.

The protein localises to the cytoplasm. The enzyme catalyses tRNA(Pro) + L-proline + ATP = L-prolyl-tRNA(Pro) + AMP + diphosphate. Functionally, catalyzes the attachment of proline to tRNA(Pro) in a two-step reaction: proline is first activated by ATP to form Pro-AMP and then transferred to the acceptor end of tRNA(Pro). As ProRS can inadvertently accommodate and process non-cognate amino acids such as alanine and cysteine, to avoid such errors it has two additional distinct editing activities against alanine. One activity is designated as 'pretransfer' editing and involves the tRNA(Pro)-independent hydrolysis of activated Ala-AMP. The other activity is designated 'posttransfer' editing and involves deacylation of mischarged Ala-tRNA(Pro). The misacylated Cys-tRNA(Pro) is not edited by ProRS. In Campylobacter jejuni subsp. doylei (strain ATCC BAA-1458 / RM4099 / 269.97), this protein is Proline--tRNA ligase.